Consider the following 63-residue polypeptide: Metallothionein-2 (63 aa).

This sequence belongs to the metallothionein superfamily. Type 6 family.

Functionally, this protein binds cations of several transition elements. In Caenorhabditis elegans, this protein is Metallothionein-2 (mtl-2).